We begin with the raw amino-acid sequence, 363 residues long: Ribonuclease D (363 aa).

Residues 5 to 168 enclose the 3'-5' exonuclease domain; it reads ITHPSELTDR…AIHDELTRRL (164 aa). Positions 208–288 constitute an HRDC domain; the sequence is EPAAQRRLLR…NTPLPDEEHA (81 aa).

Belongs to the RNase D family. Requires a divalent metal cation as cofactor.

The protein localises to the cytoplasm. It carries out the reaction Exonucleolytic cleavage that removes extra residues from the 3'-terminus of tRNA to produce 5'-mononucleotides.. Functionally, exonuclease involved in the 3' processing of various precursor tRNAs. Initiates hydrolysis at the 3'-terminus of an RNA molecule and releases 5'-mononucleotides. The protein is Ribonuclease D of Xanthomonas oryzae pv. oryzae (strain KACC10331 / KXO85).